A 227-amino-acid polypeptide reads, in one-letter code: UPF0758 protein CPF_2399 (227 aa).

Positions 105–227 constitute an MPN domain; it reads KISKPSDVAK…FISLKEKDIL (123 aa). Zn(2+)-binding residues include His-176, His-178, and Asp-189. The short motif at 176–189 is the JAMM motif element; sequence HNHPSGDPTPSRDD.

The protein belongs to the UPF0758 family.

This is UPF0758 protein CPF_2399 from Clostridium perfringens (strain ATCC 13124 / DSM 756 / JCM 1290 / NCIMB 6125 / NCTC 8237 / Type A).